The chain runs to 370 residues: Ig heavy chain C region (370 aa).

3 consecutive Ig-like domains span residues 40 to 134, 145 to 237, and 247 to 347; these read PTVI…RNIT, PAIK…DSIH, and PSVS…RTVN. Asn98, Asn132, Asn177, Asn343, Asn347, and Asn357 each carry an N-linked (GlcNAc...) asparagine glycan.

This chain is Ig heavy chain C region, found in Heterodontus francisci (Horn shark).